The sequence spans 664 residues: DNA ligase (664 aa).

NAD(+) is bound by residues 32–36 (DKDYD) and 80–81 (SL). Lys122 acts as the N6-AMP-lysine intermediate in catalysis. NAD(+) is bound by residues Arg144, Glu178, and Lys314. Residues Cys407, Cys410, Cys423, and Cys429 each coordinate Zn(2+). Residues 587-664 (IKENIFNGKT…SEEDFKNMIG (78 aa)) form the BRCT domain.

This sequence belongs to the NAD-dependent DNA ligase family. LigA subfamily. Mg(2+) serves as cofactor. It depends on Mn(2+) as a cofactor.

The enzyme catalyses NAD(+) + (deoxyribonucleotide)n-3'-hydroxyl + 5'-phospho-(deoxyribonucleotide)m = (deoxyribonucleotide)n+m + AMP + beta-nicotinamide D-nucleotide.. Its function is as follows. DNA ligase that catalyzes the formation of phosphodiester linkages between 5'-phosphoryl and 3'-hydroxyl groups in double-stranded DNA using NAD as a coenzyme and as the energy source for the reaction. It is essential for DNA replication and repair of damaged DNA. This chain is DNA ligase, found in Clostridium novyi (strain NT).